The following is a 538-amino-acid chain: Lipid scramblase CLPTM1L (538 aa).

Residues 1 to 10 lie on the Cytoplasmic side of the membrane; that stretch reads MWSGRSSFTS. A helical membrane pass occupies residues 11–31; the sequence is LVVGVFVVYVVHTCWVMYGIV. At 32–284 the chain is on the extracellular side; sequence YTRPCSGHGR…VKGIFVDTNL (253 aa). Asparagine 91 and asparagine 101 each carry an N-linked (GlcNAc...) asparagine glycan. Residues 285–305 traverse the membrane as a helical segment; it reads YFLALTFFVAAFHLLFDFLAF. At 306–324 the chain is on the cytoplasmic side; that stretch reads KNDISFWKKKKSMIGMSTK. A helical transmembrane segment spans residues 325-341; that stretch reads AVLWRCFSTVVIFLFLL. The Extracellular segment spans residues 342-402; sequence DEQTSLPVLV…TEEYDAQAMK (61 aa). The chain crosses the membrane as a helical span at residues 403–423; the sequence is YLSYLLYPLCIGGAIYSLLNI. Residues 424-428 lie on the Cytoplasmic side of the membrane; it reads KYKSW. Residues 429 to 449 traverse the membrane as a helical segment; sequence YSWLINSFVNGVYAFGFLFML. Topologically, residues 450 to 538 are extracellular; it reads PQLFVNYKMK…DTPQRKPHTD (89 aa).

Belongs to the CLPTM1 family.

It localises to the endoplasmic reticulum membrane. The enzyme catalyses a 6-(alpha-D-glucosaminyl)-1-(1,2-diacyl-sn-glycero-3-phospho)-1D-myo-inositol(in) = a 6-(alpha-D-glucosaminyl)-1-(1,2-diacyl-sn-glycero-3-phospho)-1D-myo-inositol(out). It carries out the reaction 6-(alpha-D-glucosaminyl)-(1-octadecanoyl,2-(9Z)-octadecenoyl-sn-glycero-3-phospho)-1D-myo-inositol(in) = 6-(alpha-D-glucosaminyl)-(1-octadecanoyl,2-(9Z)-octadecenoyl-sn-glycero-3-phospho)-1D-myo-inositol(out). The catalysed reaction is a 1,2-diacyl-sn-glycero-3-phospho-(1D-myo-inositol)(in) = a 1,2-diacyl-sn-glycero-3-phospho-(1D-myo-inositol)(out). It catalyses the reaction a 1,2-diacyl-sn-glycero-3-phosphocholine(in) = a 1,2-diacyl-sn-glycero-3-phosphocholine(out). The enzyme catalyses a 1,2-diacyl-sn-glycero-3-phosphoethanolamine(in) = a 1,2-diacyl-sn-glycero-3-phosphoethanolamine(out). Its function is as follows. Scramblase that mediates the translocation of glucosaminylphosphatidylinositol (alpha-D-GlcN-(1-6)-(1,2-diacyl-sn-glycero-3-phospho)-1D-myo-inositol, GlcN-PI) across the endoplasmic reticulum (ER) membrane, from the cytosolic leaflet to the luminal leaflet of the ER membrane, where it participates in the biosynthesis of glycosylphosphatidylinositol (GPI). GPI is a lipid glycoconjugate involved in post-translational modification of proteins. Can also translocate 1,2-diacyl-sn-glycero-3-phospho-(1D-myo-inositol) (phosphatidylinositol or PI), as well as several other phospholipids (1,2-diacyl-sn-glycero-3-phosphocholine, 1,2-diacyl-sn-glycero-3-phosphoethanolamine), and N-acetylglucosaminylphosphatidylinositol (GlcNAc-PI) in vitro. The chain is Lipid scramblase CLPTM1L (CLPTM1L) from Bos taurus (Bovine).